The chain runs to 279 residues: Phosphate import ATP-binding protein PstB (279 aa).

Residues 33-274 (LDINKLNLFY…PLKKKTEDYI (242 aa)) enclose the ABC transporter domain. 65 to 72 (GPSGCGKS) is an ATP binding site.

It belongs to the ABC transporter superfamily. Phosphate importer (TC 3.A.1.7) family. The complex is composed of two ATP-binding proteins (PstB), two transmembrane proteins (PstC and PstA) and a solute-binding protein (PstS).

The protein localises to the cell inner membrane. It catalyses the reaction phosphate(out) + ATP + H2O = ADP + 2 phosphate(in) + H(+). Its function is as follows. Part of the ABC transporter complex PstSACB involved in phosphate import. Responsible for energy coupling to the transport system. In Colwellia psychrerythraea (strain 34H / ATCC BAA-681) (Vibrio psychroerythus), this protein is Phosphate import ATP-binding protein PstB.